A 390-amino-acid chain; its full sequence is Probable L-tyrosine/L-aspartate decarboxylase (390 aa).

K239 is subject to N6-(pyridoxal phosphate)lysine.

The protein belongs to the group II decarboxylase family. MfnA subfamily. It depends on pyridoxal 5'-phosphate as a cofactor.

It carries out the reaction L-tyrosine + H(+) = tyramine + CO2. The catalysed reaction is L-aspartate + H(+) = beta-alanine + CO2. The protein operates within cofactor biosynthesis; methanofuran biosynthesis. It functions in the pathway cofactor biosynthesis; coenzyme A biosynthesis. In terms of biological role, catalyzes the decarboxylation of L-tyrosine to produce tyramine for methanofuran biosynthesis. Can also catalyze the decarboxylation of L-aspartate to produce beta-alanine for coenzyme A (CoA) biosynthesis. The polypeptide is Probable L-tyrosine/L-aspartate decarboxylase (Methanococcus aeolicus (strain ATCC BAA-1280 / DSM 17508 / OCM 812 / Nankai-3)).